The following is a 396-amino-acid chain: MKSTIFFILSLLLMLENQAAGRRLSGSAGAQDPVISRVWAKSQDMEEAVSGSGLTAEGGRGSDREESVGERVSLRQEEFEKGHIRSSVEEPEGEHVSVRREHLEKSHIRHNVEEPEGERVSVRREHLEKSHIRHSAEEPEGERVSVRHERVEKTHKRFHDDSVEESDSASSVDHRKKGHIRFKRQDPIAALAAIEGQDAVKDSLWVKGQASSEERFSVKGQDLVKGHLQMKGQSSLAERFSVTGQDSVKGRLQMKGQDTLAERFSMTGQDSVKSRLQMKGQDSLSERFSMTGQDSVKGRLQMKGQSSLAERFSVTGQDSVKGRLQMKGKDTLAERFSVTGQDSVKGRLQMKGHDLLEERFSVSGQDSVKGLARIKGQESVQSGFSVKGQGSLKGLI.

A signal peptide spans 1-21; sequence MKSTIFFILSLLLMLENQAAG. A disordered region spans residues 45–178; that stretch reads MEEAVSGSGL…ASSVDHRKKG (134 aa). Positions 60-152 are enriched in basic and acidic residues; the sequence is RGSDREESVG…RVSVRHERVE (93 aa). SVP-3/-4 repeat repeat units follow at residues 65-88, 89-112, and 113-136; these read EESV…RSSV, EEPE…RHNV, and EEPE…RHSA. Residues 137-157 form an SVP-3/-4 repeat; truncated repeat; sequence EEPEGERVSVRHERVEKTHKR. Residues 177–192 constitute a propeptide that is removed on maturation; that stretch reads KGHIRFKRQDPIAALA. SVP-1 clotting repeat units follow at residues 194–217, 218–241, 242–265, 266–289, 290–313, 314–337, 338–361, and 362–385; these read IEGQ…ERFS, VKGQ…ERFS, VTGQ…ERFS, MTGQ…ERFS, and VSGQ…SGFS. A 9 X tandem repeats of SVP-1 like motif region spans residues 194–396; the sequence is IEGQDAVKDS…KGQGSLKGLI (203 aa). The disordered stretch occupies residues 377-396; sequence QESVQSGFSVKGQGSLKGLI. One copy of the SVP-1 clotting 9; truncated repeat lies at 386-396; it reads VKGQGSLKGLI.

It to the SVP-2 precursor, particularly in regions where protein processing must occur. Post-translationally, SVP-3 may be a post-translationally modified form of SVP-4. Covalent clotting of SVP-1 is catalyzed by a transglutaminase secreted by the anterior prostate through the formation of gamma-glutamyl-epsilon-lysine cross-links. The conserved 2 Lys and 1 Gln residues per functional unit seem to be the residues involved in the formation of those cross-links.

Its subcellular location is the secreted. SVP-1 serves as substrate in the formation of the copulatory plug. SVP-3 and SVP-4 may also contribute to the clot. The sequence is that of Seminal vesicle major clotting proteins from Cavia porcellus (Guinea pig).